A 402-amino-acid polypeptide reads, in one-letter code: MDRTETRFRKRGQITGKITTSRQLHPQNEQSPQRSTSGYPLQEVVDDEVLGPSAPGVDPSPPCRSLGWKRKKEWSDESEEEPEKELAPEPEETWVVETLCGLKMKLKQQRVSPILPEHHKDFNSQLAPGVDPSPPHRSFCWKRKREWWDESEESLEEEPRKVLAPEPEEIWVAEMLCGLKMKLKRRRVLLVLPEHHEAFNRLLEDPVIKRFLAWDKDLRVSDKYLLAMVIVYFSRAGLPSWQYQRIHFFLALYLANDMEEDDEDSKQNIFHFLYGKTRSRIPLLRKRWFQLGRSMNPRARKNRSRIPLLRKRRFQLGRSMNPRARKYRSRIPLVRKRRFQLRRCMNPRARKNRSQIVLFQKLRFQFFCSMSGRAWVSPEELEEIQAYDPEHWVWARDRAHLS.

The segment at 1 to 90 is disordered; it reads MDRTETRFRK…EPEKELAPEP (90 aa). Residues 16–39 show a composition bias toward polar residues; that stretch reads GKITTSRQLHPQNEQSPQRSTSGY. Positions 76-90 are enriched in acidic residues; it reads DESEEEPEKELAPEP.

Belongs to the Speedy/Ringo family.

This Homo sapiens (Human) protein is Speedy protein E21.